Reading from the N-terminus, the 844-residue chain is MGFLSKIVDGNKKEIKRLGKLADKVLALEEDTAILTDEEIREKTKSFQKELAEIEDVKKQNDYLDKILPEAYALVREGSKRVFNMIPYKVQVMGGIAIHKGDIAEMRTGEGKTLTATMPTYLNALAGRGVHVITVNEYLSSSQSEEMAELYNYLGLTVGLNLNSKSTEEKREAYAQDITYSTNNELGFDYLRDNMVNYAEERVMRPLHFAIIDEVDSILIDEARTPLIISGEAEKSTSLYTQANVFAKMLKAEDDYNYDEKTKAVHLTEQGADKAERMFKVDNLYDVQNVEVISHINTALRAHVTLQRDVDYMVVDGEVLIVDQFTGRTMPGRRFSEGLHQAIEAKEGVAIQNESKTMASITFQNYFRMYNKLAGMTGTAKTEEEEFRNIYNMTVTQIPTNKPVQRKDNSDLIYISQKGKFDAVVEDVVEKHKKGQPVLLGTVAVETSEYISNLLKKRGVRHDVLNAKNHEREAEIVSNAGQKGAVTIATNMAGRGTDIKLGDGVEELGGLAVIGTERHESRRIDDQLRGRSGRQGDRGDSRFYLSLQDELMVRFGSERLQKMMNRLGMDDSTPIESKMVSRAVESAQKRVEGNNFDARKRILEYDEVLRKQREIIYNERNEIIDSEESSQVVNAMLRSTLQRAINHFINEEDDNPDYTPFINYVNDVFLQEGDLQDTEIKGKDSEDIFEIVWSKIEKAYAQQQETLGDQMSEFERMILLRSIDTHWTDHIDTMDQLRQGIHLRSYAQQNPLRDYQNEGHELFDIMMQNIEEDTCKYILKSVVQFEDDVEREKSKSFGEAKHVTAEDGKEKAKPQPIVKGDQVGRNDPCPCGSGKKYKNCHGKA.

ATP is bound by residues Q91, 109-113, and D498; that span reads GEGKT. The span at 793–813 shows a compositional bias: basic and acidic residues; it reads KSKSFGEAKHVTAEDGKEKAK. The tract at residues 793 to 825 is disordered; the sequence is KSKSFGEAKHVTAEDGKEKAKPQPIVKGDQVGR. Residues C829, C831, C840, and H841 each contribute to the Zn(2+) site.

The protein belongs to the SecA family. Monomer and homodimer. Part of the essential Sec protein translocation apparatus which comprises SecA, SecYEG and auxiliary proteins SecDF. Other proteins may also be involved. Zn(2+) serves as cofactor.

The protein resides in the cell membrane. It is found in the cytoplasm. The catalysed reaction is ATP + H2O + cellular proteinSide 1 = ADP + phosphate + cellular proteinSide 2.. Functionally, part of the Sec protein translocase complex. Interacts with the SecYEG preprotein conducting channel. Has a central role in coupling the hydrolysis of ATP to the transfer of proteins into and across the cell membrane, serving as an ATP-driven molecular motor driving the stepwise translocation of polypeptide chains across the membrane. This Staphylococcus epidermidis (strain ATCC 35984 / DSM 28319 / BCRC 17069 / CCUG 31568 / BM 3577 / RP62A) protein is Protein translocase subunit SecA 1.